The chain runs to 997 residues: Burkholderia TALE-like protein 2 (997 aa).

The Cryptic repeat -1 repeat unit spans residues 19–50 (LSPLERIKIEKHYGGGATLAFISNQHDELAQV). A Cryptic repeat 0 repeat occupies 51-83 (LSRADILKIASYDCAAQALQAVLDCGPMLGKRG). Core repeat repeat units follow at residues 84–116 (FSRA…GKRG), 117–147 (FSQV…GERG), 148–180 (FSRG…RERG), 181–213 (FNQA…GKRG), 214–244 (FSRV…RKRG), 245–277 (FHPT…RERG), 278–310 (FSQA…CERG), 311–343 (FSQP…RERG), 344–376 (FSQA…HERG), 377–409 (FSQA…RERG), 410–442 (FSQP…RERG), 443–475 (VRQA…RERG), 476–508 (FNQA…DKRG), 509–539 (FSRV…RKRG), 540–572 (FNPT…RERG), 573–605 (FNQA…RERG), 606–638 (FSQP…HKRG), 639–671 (FNPT…RERG), 672–704 (FGQP…RERG), 705–737 (FSQP…RERG), 738–770 (FSQS…RESD), 771–803 (FRQA…RQRG), 804–836 (FNRA…DERG), 837–869 (FNLT…QQRG), 870–902 (FNLT…RQRG), 903–935 (FNLI…RQRD), and 936–967 (LSLI…MQAG). The interval 84 to 967 (FSRADIVRIA…KYGPVLMQAG (884 aa)) is buD domain. ANK repeat units follow at residues 772–801 (RQAD…RLRQ), 805–834 (NRAS…TLDE), 838–867 (NLTN…TLQQ), and 871–900 (NLTD…TLRQ). The Cryptic repeat +1 repeat unit spans residues 968–997 (RSNEEIVHVAARRGGAGRIRKMVALLLERQ).

It belongs to the transcription activator-like effector (TALE) family. Bat subfamily.

In terms of biological role, binds to DNA in a sequence-specific manner. The polypeptide is Burkholderia TALE-like protein 2 (Mycetohabitans rhizoxinica (strain DSM 19002 / CIP 109453 / HKI 454) (Paraburkholderia rhizoxinica)).